The sequence spans 504 residues: Maturase K (504 aa).

It belongs to the intron maturase 2 family. MatK subfamily.

It is found in the plastid. It localises to the chloroplast. Usually encoded in the trnK tRNA gene intron. Probably assists in splicing its own and other chloroplast group II introns. In Calyptranthes pallens (Spicewood), this protein is Maturase K.